We begin with the raw amino-acid sequence, 163 residues long: Phosphopantetheine adenylyltransferase (163 aa).

Residue S9 coordinates substrate. ATP contacts are provided by residues 9–10 (SF) and H17. 3 residues coordinate substrate: K41, T73, and R87. ATP-binding positions include 88–90 (GLR), E98, and 123–129 (YSYLSSS).

Belongs to the bacterial CoaD family. In terms of assembly, homohexamer. The cofactor is Mg(2+).

The protein localises to the cytoplasm. It catalyses the reaction (R)-4'-phosphopantetheine + ATP + H(+) = 3'-dephospho-CoA + diphosphate. It functions in the pathway cofactor biosynthesis; coenzyme A biosynthesis; CoA from (R)-pantothenate: step 4/5. Functionally, reversibly transfers an adenylyl group from ATP to 4'-phosphopantetheine, yielding dephospho-CoA (dPCoA) and pyrophosphate. The chain is Phosphopantetheine adenylyltransferase from Lachnoclostridium phytofermentans (strain ATCC 700394 / DSM 18823 / ISDg) (Clostridium phytofermentans).